We begin with the raw amino-acid sequence, 540 residues long: uncharacterized protein (540 aa).

Topologically, residues 1–61 (MFSIFKKKTS…TNDSPWQDPT (61 aa)) are cytoplasmic. The chain crosses the membrane as a helical span at residues 62–82 (YFSSFGKELMFIATCMLAQLL). The Extracellular portion of the chain corresponds to 83–108 (NQAGQTHALCIMNVLSKSFNSEANNQ). The chain crosses the membrane as a helical span at residues 109-129 (AWLMASFPLAAGSFILISGRL). Over 130 to 131 (GD) the chain is Cytoplasmic. Residues 132 to 152 (IYGLKKMLIVGYVIVIVWSII) form a helical membrane-spanning segment. Over 153 to 169 (SGLSKYSNSDAFFITSR) the chain is Extracellular. The helical transmembrane segment at 170–190 (AFQGVGIAFILPNIMGLVGHV) threads the bilayer. Topologically, residues 191 to 203 (YKVGSFRKNIVIS) are cytoplasmic. Residues 204 to 224 (FIGACAPTGGMFGGLFGGLIV) traverse the membrane as a helical segment. The Extracellular segment spans residues 225-232 (TEDPNQWP). A helical transmembrane segment spans residues 233 to 253 (WVFYAFGIATFLSLLMAWYSI). Residues 254 to 272 (PNNVPTNIHGLSMDWTGSA) are Cytoplasmic-facing. The helical transmembrane segment at 273-293 (LAIIGLILFNFVWNQAPIVGW) threads the bilayer. The Extracellular portion of the chain corresponds to 294 to 295 (DK). The chain crosses the membrane as a helical span at residues 296-316 (PYIIVLLIISVIFLVAFFVYE). At 317-334 (SKYAEVPLLPRAMTKNRH) the chain is on the cytoplasmic side. A helical transmembrane segment spans residues 335-355 (MIMILLAVFLGWGSFGIWTFY). Residues 356–372 (YVSFQLNLRHYSPVWTG) lie on the Extracellular side of the membrane. A helical membrane pass occupies residues 373–393 (GTYFVFVIFGSMAAFFVAFSI). The Cytoplasmic portion of the chain corresponds to 394 to 398 (KRLGP). Residues 399 to 419 (ALLLCFSLMAFDAGSIMFSVL) form a helical membrane-spanning segment. Over 420–429 (PVEQSYWKLN) the chain is Extracellular. A helical membrane pass occupies residues 430 to 450 (FAMQAILCFGMDLSFPASSII). The Cytoplasmic segment spans residues 451-461 (LSDGLPMQYQG). The chain crosses the membrane as a helical span at residues 462–482 (MAGSLVNTVINYSASLCLGMG). At 483–502 (GTVEHQINKSGNDLLKGYRA) the chain is on the extracellular side. A helical membrane pass occupies residues 503-523 (AVYLGVGLASLGVVISVTYML). Over 524–540 (ENLWNRHRKSEDRSLEA) the chain is Cytoplasmic.

Belongs to the major facilitator superfamily.

It localises to the membrane. This is an uncharacterized protein from Saccharomyces cerevisiae (strain ATCC 204508 / S288c) (Baker's yeast).